Consider the following 138-residue polypeptide: UPF0310 protein MAV_1800 (138 aa).

It belongs to the UPF0310 family.

This chain is UPF0310 protein MAV_1800, found in Mycobacterium avium (strain 104).